Reading from the N-terminus, the 59-residue chain is UPF0434 protein VIBHAR_01537 (59 aa).

This sequence belongs to the UPF0434 family.

This Vibrio campbellii (strain ATCC BAA-1116) protein is UPF0434 protein VIBHAR_01537.